A 126-amino-acid chain; its full sequence is Large ribosomal subunit protein bL12 (126 aa).

It belongs to the bacterial ribosomal protein bL12 family. In terms of assembly, homodimer. Part of the ribosomal stalk of the 50S ribosomal subunit. Forms a multimeric L10(L12)X complex, where L10 forms an elongated spine to which 2 to 4 L12 dimers bind in a sequential fashion. Binds GTP-bound translation factors.

Functionally, forms part of the ribosomal stalk which helps the ribosome interact with GTP-bound translation factors. Is thus essential for accurate translation. In Chlorobium phaeobacteroides (strain BS1), this protein is Large ribosomal subunit protein bL12.